Consider the following 216-residue polypeptide: Probable transaldolase (216 aa).

The active-site Schiff-base intermediate with substrate is lysine 83.

Belongs to the transaldolase family. Type 3B subfamily.

It is found in the cytoplasm. The enzyme catalyses D-sedoheptulose 7-phosphate + D-glyceraldehyde 3-phosphate = D-erythrose 4-phosphate + beta-D-fructose 6-phosphate. It functions in the pathway carbohydrate degradation; pentose phosphate pathway; D-glyceraldehyde 3-phosphate and beta-D-fructose 6-phosphate from D-ribose 5-phosphate and D-xylulose 5-phosphate (non-oxidative stage): step 2/3. Its function is as follows. Transaldolase is important for the balance of metabolites in the pentose-phosphate pathway. The protein is Probable transaldolase of Clostridioides difficile (strain 630) (Peptoclostridium difficile).